A 451-amino-acid chain; its full sequence is NADH-quinone oxidoreductase subunit D (451 aa).

It belongs to the complex I 49 kDa subunit family. In terms of assembly, NDH-1 is composed of 14 different subunits. Subunits NuoB, C, D, E, F, and G constitute the peripheral sector of the complex.

It localises to the cell membrane. The enzyme catalyses a quinone + NADH + 5 H(+)(in) = a quinol + NAD(+) + 4 H(+)(out). Its function is as follows. NDH-1 shuttles electrons from NADH, via FMN and iron-sulfur (Fe-S) centers, to quinones in the respiratory chain. The immediate electron acceptor for the enzyme in this species is believed to be a menaquinone. Couples the redox reaction to proton translocation (for every two electrons transferred, four hydrogen ions are translocated across the cytoplasmic membrane), and thus conserves the redox energy in a proton gradient. This chain is NADH-quinone oxidoreductase subunit D, found in Mycolicibacterium gilvum (strain PYR-GCK) (Mycobacterium gilvum (strain PYR-GCK)).